A 122-amino-acid chain; its full sequence is Beta-2-microglobulin (122 aa).

The first 22 residues, 1 to 22 (MMARIFILALLGQLCFLPYLDA), serve as a signal peptide directing secretion. The region spanning 27–115 (PKVQVYSRHP…HLTLQEPKVV (89 aa)) is the Ig-like C1-type domain. An intrachain disulfide couples C47 to C102.

Belongs to the beta-2-microglobulin family. In terms of assembly, heterodimer of an alpha chain and a beta chain. Beta-2-microglobulin is the beta-chain of major histocompatibility complex class I molecules.

The protein resides in the secreted. Component of the class I major histocompatibility complex (MHC). Involved in the presentation of peptide antigens to the immune system. This chain is Beta-2-microglobulin (B2M), found in Trichosurus vulpecula (Brush-tailed possum).